Reading from the N-terminus, the 341-residue chain is S-adenosylmethionine:tRNA ribosyltransferase-isomerase (341 aa).

This sequence belongs to the QueA family. In terms of assembly, monomer.

It localises to the cytoplasm. The enzyme catalyses 7-aminomethyl-7-carbaguanosine(34) in tRNA + S-adenosyl-L-methionine = epoxyqueuosine(34) in tRNA + adenine + L-methionine + 2 H(+). It functions in the pathway tRNA modification; tRNA-queuosine biosynthesis. In terms of biological role, transfers and isomerizes the ribose moiety from AdoMet to the 7-aminomethyl group of 7-deazaguanine (preQ1-tRNA) to give epoxyqueuosine (oQ-tRNA). In Acetivibrio thermocellus (strain ATCC 27405 / DSM 1237 / JCM 9322 / NBRC 103400 / NCIMB 10682 / NRRL B-4536 / VPI 7372) (Clostridium thermocellum), this protein is S-adenosylmethionine:tRNA ribosyltransferase-isomerase.